A 125-amino-acid polypeptide reads, in one-letter code: Succinate dehydrogenase assembly factor 3, mitochondrial (125 aa).

The transit peptide at 1-42 (MRTTNHLYRTVHRQGKPLLPPLHLYRRILRAHRTFPPAQRAL) directs the protein to the mitochondrion.

Belongs to the complex I LYR family. SDHAF3 subfamily. Interacts with the iron-sulfur protein subunit within the SDH catalytic dimer.

Its subcellular location is the mitochondrion matrix. In terms of biological role, plays an essential role in the assembly of succinate dehydrogenase (SDH), an enzyme complex (also referred to as respiratory complex II) that is a component of both the tricarboxylic acid (TCA) cycle and the mitochondrial electron transport chain, and which couples the oxidation of succinate to fumarate with the reduction of ubiquinone (coenzyme Q) to ubiquinol. Promotes maturation of the iron-sulfur protein subunit of the SDH catalytic dimer, protecting it from the deleterious effects of oxidants. May act together with SDHAF1. The chain is Succinate dehydrogenase assembly factor 3, mitochondrial from Eremothecium gossypii (strain ATCC 10895 / CBS 109.51 / FGSC 9923 / NRRL Y-1056) (Yeast).